We begin with the raw amino-acid sequence, 205 residues long: Ribosomal RNA large subunit methyltransferase E (205 aa).

Residues Gly60, Trp62, Asp80, Asp96, and Asp121 each contribute to the S-adenosyl-L-methionine site. The Proton acceptor role is filled by Lys161.

The protein belongs to the class I-like SAM-binding methyltransferase superfamily. RNA methyltransferase RlmE family.

It is found in the cytoplasm. It carries out the reaction uridine(2552) in 23S rRNA + S-adenosyl-L-methionine = 2'-O-methyluridine(2552) in 23S rRNA + S-adenosyl-L-homocysteine + H(+). Its function is as follows. Specifically methylates the uridine in position 2552 of 23S rRNA at the 2'-O position of the ribose in the fully assembled 50S ribosomal subunit. This chain is Ribosomal RNA large subunit methyltransferase E, found in Chromobacterium violaceum (strain ATCC 12472 / DSM 30191 / JCM 1249 / CCUG 213 / NBRC 12614 / NCIMB 9131 / NCTC 9757 / MK).